Consider the following 270-residue polypeptide: MESLSLKFIEPYWFKFVDYYGEDFLITYGTFIAHEVFYFGSFIPFFLCDFMPFLQKYKIQPTKKNEWKTQFNCIFKVLMTHIFVQLPMMYIFDPAIKAIGLSARAPLPSIPYLIFTIACCFLIEDFYFYWVHRALHHGFWYKHIHKVHHDHAAPFGMTAEYAHPLETVILGVGTVIGPFLFSRDLFTLWVWLGTRLFQTVECHSGYDFPWNPTKLIPFWGGSHFHDFHHETFVGNYSSTFTYLDKIFGTSDKYYSRKQIRDSKLAAGKSE.

The next 3 membrane-spanning stretches (helical) occupy residues 31–51 (FIAH…CDFM), 82–102 (IFVQ…IGLS), and 110–130 (IPYL…YFYW). The Fatty acid hydroxylase domain occupies 118 to 249 (ACCFLIEDFY…FTYLDKIFGT (132 aa)). The short motif at 132 to 136 (HRALH) is the Histidine box-1 element. The short motif at 145 to 149 (HKVHH) is the Histidine box-2 element. Positions 224 to 230 (FHDFHHE) match the Histidine box-3 motif.

The protein belongs to the sterol desaturase family. It depends on Fe cation as a cofactor.

It localises to the endoplasmic reticulum membrane. It carries out the reaction 4,4-dimethyl-5alpha-cholest-7-en-3beta-ol + 6 Fe(II)-[cytochrome b5] + 3 O2 + 5 H(+) = 4alpha-carboxy-4beta-methyl-5alpha-cholest-7-ene-3beta-ol + 6 Fe(III)-[cytochrome b5] + 4 H2O. The protein operates within steroid biosynthesis; zymosterol biosynthesis; zymosterol from lanosterol: step 3/6. This is Putative methylsterol monooxygenase DDB_G0269788 from Dictyostelium discoideum (Social amoeba).